We begin with the raw amino-acid sequence, 213 residues long: Nicotinate-nucleotide adenylyltransferase (213 aa).

Belongs to the NadD family.

The catalysed reaction is nicotinate beta-D-ribonucleotide + ATP + H(+) = deamido-NAD(+) + diphosphate. The protein operates within cofactor biosynthesis; NAD(+) biosynthesis; deamido-NAD(+) from nicotinate D-ribonucleotide: step 1/1. Catalyzes the reversible adenylation of nicotinate mononucleotide (NaMN) to nicotinic acid adenine dinucleotide (NaAD). The polypeptide is Nicotinate-nucleotide adenylyltransferase (Salmonella typhi).